The following is a 482-amino-acid chain: Bile acid receptor (482 aa).

A Glycyl lysine isopeptide (Lys-Gly) (interchain with G-Cter in SUMO1) cross-link involves residue Lys132. A DNA-binding region (nuclear receptor) is located at residues 134–209 (DELCVVCGDR…MGMLAECLLT (76 aa)). The NR C4-type zinc-finger motif lies at 137–157 (CVVCGDRASGYHYNALTCEGC). A phosphoserine; by PKC/PRKCA mark is found at Ser145 and Ser164. Position 167 is an N6-acetyllysine; by EP300 (Lys167). The NR C4-type zinc finger occupies 173–197 (CKNGGNCVMDMYMRRKCQECRLRKC). Lys216 carries the post-translational modification N6-methyllysine; by SETD7. Lys223 carries the post-translational modification N6-acetyllysine; by EP300. Basic and acidic residues predominate over residues 229-240 (AIHEDSEGRDLR). Residues 229-253 (AIHEDSEGRDLRQVTSTTKSCREKT) are disordered. Positions 258–482 (DQQNLLHYIM…PLLCEIWDVQ (225 aa)) constitute an NR LBD domain. A Glycyl lysine isopeptide (Lys-Gly) (interchain with G-Cter in SUMO1) cross-link involves residue Lys285. Positions 341, 371, and 379 each coordinate chenodeoxycholate. The residue at position 452 (Thr452) is a Phosphothreonine; by PKC/PRKCZ. His457 lines the chenodeoxycholate pocket.

This sequence belongs to the nuclear hormone receptor family. NR1 subfamily. In terms of assembly, heterodimer with RXRA; the heterodimerization enhances the binding affinity for LXXLL motifs from coactivators. Binds DNA predominantly as a heterodimer with RXRA. After activation by agonist binding interacts with coactivators. Interacts with NCOA1, NCOA2, PPARGC1A, CARM1, SETD7, PRMT1, GPS2, SMARCA4 and MED1, EP300 and SMARCD1. Interacts with XRCC5 and XRCC6; decreasing NR1H4/FXR transactivation activity towards ABCB11/BSEP. Interacts with PAGR1 AND NCOA6; indicative for an association with an MLL2/MLL3 complex (ASCOM). Acetylated by EP300. Lys-223 as is the major acetylation site for EP300; the dynamicly regulated acetylation inhibits heterodimerization with RXRA and transactivation activity. Deacetylated by SIRT1. In terms of processing, methylation may increase transactivation of target genes. Post-translationally, phosphorylation by PKC/PRKCA increases transactivation activity by promoting association with PPARGC1A. Sumoylated upon ligand binding.

It is found in the nucleus. Ligand-activated transcription factor. Receptor for bile acids (BAs) such as chenodeoxycholic acid (CDCA), lithocholic acid, deoxycholic acid (DCA) and allocholic acid (ACA). Plays a essential role in BA homeostasis through the regulation of genes involved in BA synthesis, conjugation and enterohepatic circulation. Also regulates lipid and glucose homeostasis and is involved innate immune response. The FXR-RXR heterodimer binds predominantly to farnesoid X receptor response elements (FXREs) containing two inverted repeats of the consensus sequence 5'-AGGTCA-3' in which the monomers are spaced by 1 nucleotide (IR-1) but also to tandem repeat DR1 sites with lower affinity, and can be activated by either FXR or RXR-specific ligands. It is proposed that monomeric nuclear receptors such as NR5A2/LRH-1 bound to coregulatory nuclear responsive element (NRE) halfsites located in close proximity to FXREs modulate transcriptional activity. In the liver activates transcription of the corepressor NR0B2 thereby indirectly inhibiting CYP7A1 and CYP8B1 (involved in BA synthesis) implicating at least in part histone demethylase KDM1A resulting in epigenomic repression, and SLC10A1/NTCP (involved in hepatic uptake of conjugated BAs). Activates transcription of the repressor MAFG (involved in regulation of BA synthesis). Activates transcription of SLC27A5/BACS and BAAT (involved in BA conjugation), ABCB11/BSEP (involved in bile salt export) by directly recruiting histone methyltransferase CARM1, and ABCC2/MRP2 (involved in secretion of conjugated BAs) and ABCB4 (involved in secretion of phosphatidylcholine in the small intestine). Activates transcription of SLC27A5/BACS and BAAT (involved in BA conjugation), ABCB11/BSEP (involved in bile salt export) by directly recruiting histone methyltransferase CARM1, and ABCC2/MRP2 (involved in secretion of conjugated BAs) and ABCB4 (involved in secretion of phosphatidylcholine in the small intestine). In the intestine activates FGF19 expression and secretion leading to hepatic CYP7A1 repression. The function also involves the coordinated induction of hepatic KLB/beta-klotho expression. Regulates transcription of liver UGT2B4 and SULT2A1 involved in BA detoxification; binding to the UGT2B4 promoter seems to imply a monomeric transactivation independent of RXRA. Modulates lipid homeostasis by activating liver NR0B2/SHP-mediated repression of SREBF1 (involved in de novo lipogenesis), expression of PLTP (involved in HDL formation), SCARB1 (involved in HDL hepatic uptake), APOE, APOC1, APOC4, PPARA (involved in beta-oxidation of fatty acids), VLDLR and SDC1 (involved in the hepatic uptake of LDL and IDL remnants), and inhibiting expression of MTTP (involved in VLDL assembly). Increases expression of APOC2 (promoting lipoprotein lipase activity implicated in triglyceride clearance). Transrepresses APOA1 involving a monomeric competition with NR2A1 for binding to a DR1 element. Also reduces triglyceride clearance by inhibiting expression of ANGPTL3 and APOC3 (both involved in inhibition of lipoprotein lipase). Involved in glucose homeostasis by modulating hepatic gluconeogenesis through activation of NR0B2/SHP-mediated repression of respective genes. Modulates glycogen synthesis (inducing phosphorylation of glycogen synthase kinase-3). Modulates glucose-stimulated insulin secretion and is involved in insulin resistance. Involved in intestinal innate immunity. Plays a role in protecting the distal small intestine against bacterial overgrowth and preservation of the epithelial barrier. Down-regulates inflammatory cytokine expression in several types of immune cells including macrophages and mononuclear cells. Mediates trans-repression of TLR4-induced cytokine expression; the function seems to require its sumoylation and prevents N-CoR nuclear receptor corepressor clearance from target genes such as IL1B and NOS2. Involved in the TLR9-mediated protective mechanism in intestinal inflammation. Plays an anti-inflammatory role in liver inflammation; proposed to inhibit pro-inflammatory (but not antiapoptotic) NF-kappa-B signaling. This chain is Bile acid receptor (NR1H4), found in Bos taurus (Bovine).